Here is a 117-residue protein sequence, read N- to C-terminus: Putative membrane protein insertion efficiency factor (117 aa).

Belongs to the UPF0161 family.

The protein resides in the cell inner membrane. Functionally, could be involved in insertion of integral membrane proteins into the membrane. This is Putative membrane protein insertion efficiency factor from Nitrobacter winogradskyi (strain ATCC 25391 / DSM 10237 / CIP 104748 / NCIMB 11846 / Nb-255).